Consider the following 1036-residue polypeptide: uncharacterized protein (1036 aa).

A signal peptide spans 1–24 (MKRVGLIGVIMAALLVISATPVMA). A helical transmembrane segment spans residues 1011–1033 (GGGVPGFEAVFAIAGLLAVAYLL).

The protein resides in the membrane. This is an uncharacterized protein from Archaeoglobus fulgidus (strain ATCC 49558 / DSM 4304 / JCM 9628 / NBRC 100126 / VC-16).